The primary structure comprises 66 residues: Protein I177L (66 aa).

N11 carries N-linked (GlcNAc...) asparagine; by host glycosylation.

Belongs to the asfivirus I177L family.

It is found in the virion. This Ornithodoros (relapsing fever ticks) protein is Protein I177L.